The following is a 202-amino-acid chain: 3-isopropylmalate dehydratase small subunit (202 aa).

The protein belongs to the LeuD family. LeuD type 1 subfamily. As to quaternary structure, heterodimer of LeuC and LeuD.

The catalysed reaction is (2R,3S)-3-isopropylmalate = (2S)-2-isopropylmalate. The protein operates within amino-acid biosynthesis; L-leucine biosynthesis; L-leucine from 3-methyl-2-oxobutanoate: step 2/4. Its function is as follows. Catalyzes the isomerization between 2-isopropylmalate and 3-isopropylmalate, via the formation of 2-isopropylmaleate. The protein is 3-isopropylmalate dehydratase small subunit of Blochmanniella pennsylvanica (strain BPEN).